Here is a 162-residue protein sequence, read N- to C-terminus: Phenazine biosynthesis protein PhzA2 (162 aa).

This sequence belongs to the PhzA/PhzB family.

The protein operates within antibiotic biosynthesis; phenazine biosynthesis. Its function is as follows. Involved in the biosynthesis of the antibiotic phenazine, a nitrogen-containing heterocyclic molecule having important roles in virulence, competition and biological control. PhzA2 (operon phzA2B2C2E2F2G2) has a role in the biosynthesis of the phenazine during both planktonic growth and biofilm development, and in host infection during biofilm development. This Pseudomonas aeruginosa (strain ATCC 15692 / DSM 22644 / CIP 104116 / JCM 14847 / LMG 12228 / 1C / PRS 101 / PAO1) protein is Phenazine biosynthesis protein PhzA2.